The primary structure comprises 195 residues: CASP-like protein 1B2 (195 aa).

The Cytoplasmic segment spans residues 1–25 (MDLEKGKKPSEQAAACRIMQVKDKL). A helical membrane pass occupies residues 26–46 (ITLQPVVRACVFLATAVAAVI). Over 47 to 78 (MGLNKQSYTTVVAIVGTRPVTQTFTAKFKDTP) the chain is Extracellular. A helical transmembrane segment spans residues 79–99 (AFVFFVIANAIASGYNLMVLV). The Cytoplasmic segment spans residues 100–114 (TRRILQRRAQSLSVH). Residues 115–135 (LLDMVILTLLATGSATAASMA) form a helical membrane-spanning segment. Residues 136-160 (QLGKNGNLHARWNPICDKFGSFCNH) lie on the Extracellular side of the membrane. Residues 161–181 (GGIALVSSFIGVALMLALNLL) form a helical membrane-spanning segment. At 182-195 (SAAANSPRSNVTGQ) the chain is on the cytoplasmic side.

It belongs to the Casparian strip membrane proteins (CASP) family. In terms of assembly, homodimer and heterodimers.

It localises to the cell membrane. This chain is CASP-like protein 1B2, found in Oryza sativa subsp. indica (Rice).